The primary structure comprises 303 residues: Bifunctional protein FolD (303 aa).

Residues 175-177 (GVS) and isoleucine 243 each bind NADP(+).

Belongs to the tetrahydrofolate dehydrogenase/cyclohydrolase family. In terms of assembly, homodimer.

It carries out the reaction (6R)-5,10-methylene-5,6,7,8-tetrahydrofolate + NADP(+) = (6R)-5,10-methenyltetrahydrofolate + NADPH. The catalysed reaction is (6R)-5,10-methenyltetrahydrofolate + H2O = (6R)-10-formyltetrahydrofolate + H(+). Its pathway is one-carbon metabolism; tetrahydrofolate interconversion. Its function is as follows. Catalyzes the oxidation of 5,10-methylenetetrahydrofolate to 5,10-methenyltetrahydrofolate and then the hydrolysis of 5,10-methenyltetrahydrofolate to 10-formyltetrahydrofolate. The polypeptide is Bifunctional protein FolD (Xanthomonas euvesicatoria pv. vesicatoria (strain 85-10) (Xanthomonas campestris pv. vesicatoria)).